Here is a 102-residue protein sequence, read N- to C-terminus: Integration host factor subunit alpha (102 aa).

It belongs to the bacterial histone-like protein family. In terms of assembly, heterodimer of an alpha and a beta chain.

This protein is one of the two subunits of integration host factor, a specific DNA-binding protein that functions in genetic recombination as well as in transcriptional and translational control. The sequence is that of Integration host factor subunit alpha from Chromohalobacter salexigens (strain ATCC BAA-138 / DSM 3043 / CIP 106854 / NCIMB 13768 / 1H11).